Reading from the N-terminus, the 225-residue chain is Ribosomal RNA large subunit methyltransferase E (225 aa).

S-adenosyl-L-methionine is bound by residues glycine 79, tryptophan 81, aspartate 97, aspartate 113, and aspartate 137. The active-site Proton acceptor is the lysine 177.

It belongs to the class I-like SAM-binding methyltransferase superfamily. RNA methyltransferase RlmE family.

Its subcellular location is the cytoplasm. It carries out the reaction uridine(2552) in 23S rRNA + S-adenosyl-L-methionine = 2'-O-methyluridine(2552) in 23S rRNA + S-adenosyl-L-homocysteine + H(+). Functionally, specifically methylates the uridine in position 2552 of 23S rRNA at the 2'-O position of the ribose in the fully assembled 50S ribosomal subunit. The polypeptide is Ribosomal RNA large subunit methyltransferase E (Acidiphilium cryptum (strain JF-5)).